The primary structure comprises 154 residues: MKKTIGLILILASFGSHARTEIATKNFPVSTTISKSFFAPEPQIQPSFGKNVGKEGGLLFSVSLTVPENVSQVTVYPVYDEDYGLGRLVNTADDSQSIIYQIVDDKGRKMLKDHGAEVTPNQQITFRALNYTSGDKEIPPGIYNDQVMVGYYVN.

The signal sequence occupies residues 1–18; it reads MKKTIGLILILASFGSHA.

It localises to the fimbrium. Functionally, fimbriae (also called pili), polar filaments radiating from the surface of the bacterium to a length of 0.5-1.5 micrometers and numbering 100-300 per cell, enable bacteria to colonize the epithelium of specific host organs. The protein is CS6 fimbrial subunit A (cssA) of Escherichia coli.